Consider the following 440-residue polypeptide: Tol-Pal system protein TolB (440 aa).

An N-terminal signal peptide occupies residues 1–28 (MVMTRRIFFSWFIVICSLWLSSFSSVHA). A disordered region spans residues 417–440 (RNERQLPTPNDASDPAWSPLLNMQ).

It belongs to the TolB family. As to quaternary structure, the Tol-Pal system is composed of five core proteins: the inner membrane proteins TolA, TolQ and TolR, the periplasmic protein TolB and the outer membrane protein Pal. They form a network linking the inner and outer membranes and the peptidoglycan layer.

It localises to the periplasm. Part of the Tol-Pal system, which plays a role in outer membrane invagination during cell division and is important for maintaining outer membrane integrity. This chain is Tol-Pal system protein TolB, found in Bartonella quintana (strain Toulouse) (Rochalimaea quintana).